A 167-amino-acid polypeptide reads, in one-letter code: Dimethylamine corrinoid protein 3 (167 aa).

The B12-binding N-terminal domain maps to 1–44 (MNEVGVRFERGKLFLPHVMMAADAMTAGVNALKDLMPEGSASSK). In terms of domain architecture, B12-binding spans 45–167 (MGVIVNGTVE…AVTKAKELLA (123 aa)). H58 contacts methylcob(III)alamin.

This sequence belongs to the methylamine corrinoid protein family.

Its pathway is one-carbon metabolism; methanogenesis from dimethylamine. Its function is as follows. Acts as a methyl group carrier between MtbB and MtbA. The polypeptide is Dimethylamine corrinoid protein 3 (mtbC3) (Methanosarcina mazei (strain ATCC BAA-159 / DSM 3647 / Goe1 / Go1 / JCM 11833 / OCM 88) (Methanosarcina frisia)).